The following is a 433-amino-acid chain: Zinc finger and SCAN domain-containing protein 4 (433 aa).

The SCAN box domain occupies 44–126 (RMVLNSFQDS…RFMEDLTDDS (83 aa)). Polar residues-rich tracts occupy residues 162–184 (SAQTPREANMGTPSQTSQDTSLE) and 277–298 (QPEQSSPESALTHQSNEGNSTC). Disordered stretches follow at residues 162 to 199 (SAQTPREANMGTPSQTSQDTSLETGEGCEDEQDGCNSS) and 272 to 298 (AGCISQPEQSSPESALTHQSNEGNSTC). C2H2-type zinc fingers lie at residues 312–334 (YKCEECPKVFKYLCHLLAHQRRH), 340–362 (FVCPECQKGFFQISDLRVHQIIH), 368–390 (FTCSMCEKSFSHKTNLRSHERIH), and 396–418 (YTCPFCKTSYRQSSTYHRHMRTH). The segment at 414 to 433 (HMRTHEKITPPSVPSTPEAS) is disordered.

The protein localises to the nucleus. It is found in the chromosome. It localises to the telomere. Functionally, embryonic stem (ES) cell-specific transcription factor required to regulate ES cell pluripotency. Binds telomeres and plays a key role in genomic stability in ES cells by regulating telomere elongation. Acts as an activator of spontaneous telomere sister chromatid exchange (T-SCE) and telomere elongation in undifferentiated ES cells. This Pongo pygmaeus (Bornean orangutan) protein is Zinc finger and SCAN domain-containing protein 4 (ZSCAN4).